The sequence spans 148 residues: Cytochrome c-type biogenesis protein CcmE (148 aa).

Residues 1 to 7 (MKPRNRR) lie on the Cytoplasmic side of the membrane. Residues 8-28 (IALIVAGLSALGIATALVLNA) traverse the membrane as a helical; Signal-anchor for type II membrane protein segment. Residues 29 to 148 (FQSNLVFFFT…VQKKPASRKP (120 aa)) are Periplasmic-facing. Heme contacts are provided by His-123 and Tyr-127. A disordered region spans residues 128-148 (MPPEAQHALDEVQKKPASRKP).

Belongs to the CcmE/CycJ family.

Its subcellular location is the cell inner membrane. Its function is as follows. Heme chaperone required for the biogenesis of c-type cytochromes. Transiently binds heme delivered by CcmC and transfers the heme to apo-cytochromes in a process facilitated by CcmF and CcmH. The protein is Cytochrome c-type biogenesis protein CcmE of Pseudomonas aeruginosa.